Reading from the N-terminus, the 1242-residue chain is Phosphorylase b kinase regulatory subunit alpha, skeletal muscle isoform (1242 aa).

Phosphoserine is present on residues Ser630, Ser731, Ser737, Ser740, Ser760, Ser813, Ser974, Ser983, and Ser987. The interval 812–842 (LSELYVKVGEIRHWGLIRYISGILRKKVEAL) is calmodulin-binding. Position 1009 is a phosphoserine; by autocatalysis (Ser1009). At Ser1020 the chain carries Phosphoserine; by PKA. A phosphoserine mark is found at Ser1022 and Ser1025. The segment at 1065–1105 (SKDSRQGQWQRRRRLDGALNRVPIGFYQKVWKILQKCHGLS) is calmodulin-binding. Ser1132 carries the phosphoserine modification. The S-farnesyl cysteine moiety is linked to residue Cys1239.

This sequence belongs to the phosphorylase b kinase regulatory chain family. As to quaternary structure, hexadecamer of 4 heterotetramers, each composed of alpha, beta, gamma, and delta subunits. Alpha (PHKA1 or PHKA2) and beta (PHKB) are regulatory subunits, gamma (PHKG1 or PHKG2) is the catalytic subunit, and delta is calmodulin. In terms of processing, although the final Cys may be farnesylated, the terminal tripeptide is probably not removed, and the C-terminus is not methylated.

The protein resides in the cell membrane. It participates in glycan biosynthesis; glycogen metabolism. Its activity is regulated as follows. By phosphorylation of various serine residues and by calcium. In terms of biological role, phosphorylase b kinase catalyzes the phosphorylation of serine in certain substrates, including troponin I. The alpha chain may bind calmodulin. The chain is Phosphorylase b kinase regulatory subunit alpha, skeletal muscle isoform (Phka1) from Rattus norvegicus (Rat).